A 238-amino-acid chain; its full sequence is Probable transcriptional regulatory protein CAB166 (238 aa).

It belongs to the TACO1 family.

The protein resides in the cytoplasm. This chain is Probable transcriptional regulatory protein CAB166, found in Chlamydia abortus (strain DSM 27085 / S26/3) (Chlamydophila abortus).